The following is a 462-amino-acid chain: Glycoprotein endo-alpha-1,2-mannosidase (462 aa).

The Cytoplasmic segment spans residues 1–8 (MAKFRRGT). Residues 9-29 (CIILALFILFIFSLMMGLKML) form a helical; Signal-anchor for type II membrane protein membrane-spanning segment. The Lumenal segment spans residues 30 to 462 (RPNTATFGAP…YALDHQLPVS (433 aa)). Positions 60–462 (DFQKSDRINS…YALDHQLPVS (403 aa)) are catalytic.

This sequence belongs to the glycosyl hydrolase 99 family. In terms of processing, undergoes proteolytic cleavage in the C-terminal region.

It localises to the golgi apparatus membrane. The catalysed reaction is N-{alpha-Glc-(1-&gt;3)-alpha-Man-(1-&gt;2)-alpha-Man-(1-&gt;2)-alpha-Man-(1-&gt;3)-[alpha-Man-(1-&gt;2)-alpha-Man-(1-&gt;3)-[alpha-Man-(1-&gt;2)-alpha-Man-(1-&gt;6)]-alpha-Man-(1-&gt;6)]-beta-Man-(1-&gt;4)-beta-GlcNAc-(1-&gt;4)-beta-GlcNAc}-L-asparaginyl-[protein] + H2O = alpha-D-glucosyl-(1-&gt;3)-D-mannopyranose + N(4)-{alpha-D-Man-(1-&gt;2)-alpha-D-Man-(1-&gt;3)-[alpha-D-Man-(1-&gt;2)-alpha-D-Man-(1-&gt;3)-[alpha-D-Man-(1-&gt;2)-alpha-D-Man-(1-&gt;6)]-alpha-D-Man-(1-&gt;6)]-beta-D-Man-(1-&gt;4)-beta-D-GlaNAc-(1-&gt;4)-beta-D-GlcNAc}-L-asparaginyl-[protein] (N-glucan mannose isomer 8A1,2,3B1,2). The chain is Glycoprotein endo-alpha-1,2-mannosidase (MANEA) from Pongo abelii (Sumatran orangutan).